The sequence spans 364 residues: Probable dual-specificity RNA methyltransferase RlmN (364 aa).

The active-site Proton acceptor is the glutamate 107. The Radical SAM core domain maps to 113–346; the sequence is HEYGNSVCVT…ATIRREQGSD (234 aa). The cysteines at positions 120 and 351 are disulfide-linked. Positions 127, 131, and 134 each coordinate [4Fe-4S] cluster. Residues 177-178, serine 209, 232-234, and asparagine 308 each bind S-adenosyl-L-methionine; these read GE and SLH. Cysteine 351 serves as the catalytic S-methylcysteine intermediate.

It belongs to the radical SAM superfamily. RlmN family. The cofactor is [4Fe-4S] cluster.

The protein localises to the cytoplasm. It catalyses the reaction adenosine(2503) in 23S rRNA + 2 reduced [2Fe-2S]-[ferredoxin] + 2 S-adenosyl-L-methionine = 2-methyladenosine(2503) in 23S rRNA + 5'-deoxyadenosine + L-methionine + 2 oxidized [2Fe-2S]-[ferredoxin] + S-adenosyl-L-homocysteine. The catalysed reaction is adenosine(37) in tRNA + 2 reduced [2Fe-2S]-[ferredoxin] + 2 S-adenosyl-L-methionine = 2-methyladenosine(37) in tRNA + 5'-deoxyadenosine + L-methionine + 2 oxidized [2Fe-2S]-[ferredoxin] + S-adenosyl-L-homocysteine. Its function is as follows. Specifically methylates position 2 of adenine 2503 in 23S rRNA and position 2 of adenine 37 in tRNAs. Confers resistance to some classes of antibiotics. The protein is Probable dual-specificity RNA methyltransferase RlmN of Staphylococcus epidermidis (strain ATCC 35984 / DSM 28319 / BCRC 17069 / CCUG 31568 / BM 3577 / RP62A).